We begin with the raw amino-acid sequence, 577 residues long: Aspartate--tRNA(Asp/Asn) ligase (577 aa).

Glu-171 is an L-aspartate binding site. The segment at 195 to 198 is aspartate; the sequence is QLFK. Arg-217 provides a ligand contact to L-aspartate. ATP contacts are provided by residues 217–219 and Gln-226; that span reads RDE. His-444 lines the L-aspartate pocket. Residue Glu-474 coordinates ATP. Arg-481 is an L-aspartate binding site. ATP is bound at residue 526-529; the sequence is GFDR.

Belongs to the class-II aminoacyl-tRNA synthetase family. Type 1 subfamily. As to quaternary structure, homodimer.

The protein localises to the cytoplasm. It carries out the reaction tRNA(Asx) + L-aspartate + ATP = L-aspartyl-tRNA(Asx) + AMP + diphosphate. Its function is as follows. Aspartyl-tRNA synthetase with relaxed tRNA specificity since it is able to aspartylate not only its cognate tRNA(Asp) but also tRNA(Asn). Reaction proceeds in two steps: L-aspartate is first activated by ATP to form Asp-AMP and then transferred to the acceptor end of tRNA(Asp/Asn). The polypeptide is Aspartate--tRNA(Asp/Asn) ligase (Helicobacter pylori (strain Shi470)).